We begin with the raw amino-acid sequence, 682 residues long: Iron-phytosiderophore transporter yellow stripe 1 (682 aa).

Residues 1–36 (MDLARRGGAAGADDEGEIERHEPAPEDMESDPAAAR) form a disordered region. A run of 15 helical transmembrane segments spans residues 56–76 (GVVA…KIAL), 79–99 (GLVP…LRGW), 124–144 (CAVA…LLGL), 167–187 (GFGW…LSLI), 236–256 (LSFV…CGFV), 288–308 (LVNI…WPLI), 334–354 (FLCI…VFGV), 396–416 (FPAW…AVII), 428–448 (VIVA…GTGL), 460–480 (IALF…AGLA), 514–534 (VAQF…FLLF), 549–569 (APYG…FSVL), 574–594 (LALS…RDVL), 612–632 (FLVG…VFVW), and 640–660 (AVFM…IWTF).

Belongs to the YSL (TC 2.A.67.2) family. In terms of tissue distribution, expressed in roots of young maize seedlings. Not detected in leaves of iron-sufficient plants, but accumulates in roots and leaves of iron-deficient plants.

The protein localises to the membrane. In terms of biological role, involved in Fe(3+) uptake. Acts as a proton-coupled symporter for phytosiderophore- and nicotianamine-chelated metals. Capable of transporting either Fe(2+)-nicotianamine or Fe(3+)-phytosiderophore. May transport iron, zinc, nickel, copper and, at a lower rate, manganese and cadmium. This chain is Iron-phytosiderophore transporter yellow stripe 1 (YS1), found in Zea mays (Maize).